The following is a 257-amino-acid chain: Chymotrypsin-like protease VLCTLP (257 aa).

Residues 1–18 (MVLIRVLANLLLLQLSYA) form the signal peptide. A propeptide spanning residues 19-24 (QKSSEL) is cleaved from the precursor. The region spanning 25-248 (VVGGDECNIN…YSDWIQSIIA (224 aa)) is the Peptidase S1 domain. 6 disulfides stabilise this stretch: Cys31-Cys162, Cys49-Cys65, Cys97-Cys255, Cys141-Cys209, Cys173-Cys188, and Cys199-Cys224. N-linked (GlcNAc...) asparagine glycosylation is present at Asn44. His64 serves as the catalytic Charge relay system. N-linked (GlcNAc...) asparagine glycosylation is present at Asn100. Asp109 acts as the Charge relay system in catalysis. N-linked (GlcNAc...) asparagine glycosylation is found at Asn116 and Asn153. Ser203 functions as the Charge relay system in the catalytic mechanism. The N-linked (GlcNAc...) asparagine glycan is linked to Asn250.

The protein belongs to the peptidase S1 family. Snake venom subfamily. Monomer. Partial deglycosylation has not effect on enzyme activity. Expressed by the venom gland.

Its subcellular location is the secreted. Its activity is regulated as follows. Inhibited by PMSF. In terms of biological role, snake venom serine protease with tyrosine-specific chymotrypsin-like activity. Hydrolyzes the N-acetyl-L-tyrosine ethyl ester (ATEE). Has weak fibrinogenolytic activity. Weakly hydrolyzes azocasein, Aalpha-chain (FGA) and more slowly Bbeta-chain (FGB) of fibrinogen. Optimal substrates are angiotensins I and II (AGT). The polypeptide is Chymotrypsin-like protease VLCTLP (Macrovipera lebetinus (Levantine viper)).